The sequence spans 252 residues: 5'-nucleotidase SurE (252 aa).

Residues aspartate 8, aspartate 9, serine 39, and asparagine 91 each coordinate a divalent metal cation.

This sequence belongs to the SurE nucleotidase family. Requires a divalent metal cation as cofactor.

The protein localises to the cytoplasm. The catalysed reaction is a ribonucleoside 5'-phosphate + H2O = a ribonucleoside + phosphate. Nucleotidase that shows phosphatase activity on nucleoside 5'-monophosphates. In Legionella pneumophila (strain Paris), this protein is 5'-nucleotidase SurE.